The chain runs to 147 residues: D-aminoacyl-tRNA deacylase (147 aa).

The Gly-cisPro motif, important for rejection of L-amino acids motif lies at 136–137; sequence GP.

It belongs to the DTD family. Homodimer.

Its subcellular location is the cytoplasm. The catalysed reaction is glycyl-tRNA(Ala) + H2O = tRNA(Ala) + glycine + H(+). The enzyme catalyses a D-aminoacyl-tRNA + H2O = a tRNA + a D-alpha-amino acid + H(+). An aminoacyl-tRNA editing enzyme that deacylates mischarged D-aminoacyl-tRNAs. Also deacylates mischarged glycyl-tRNA(Ala), protecting cells against glycine mischarging by AlaRS. Acts via tRNA-based rather than protein-based catalysis; rejects L-amino acids rather than detecting D-amino acids in the active site. By recycling D-aminoacyl-tRNA to D-amino acids and free tRNA molecules, this enzyme counteracts the toxicity associated with the formation of D-aminoacyl-tRNA entities in vivo and helps enforce protein L-homochirality. This is D-aminoacyl-tRNA deacylase from Streptococcus pneumoniae (strain Taiwan19F-14).